A 498-amino-acid polypeptide reads, in one-letter code: Isocitrate dehydrogenase [NADP], mitochondrial (498 aa).

NADP(+)-binding positions include 164 to 166 and arginine 171; that span reads TIT. Threonine 166 contributes to the substrate binding site. Substrate is bound by residues 183 to 189, arginine 198, and arginine 221; that span reads SPNGTIR. Mn(2+) is bound at residue aspartate 339. Residue lysine 347 participates in NADP(+) binding. Aspartate 362 provides a ligand contact to Mn(2+). NADP(+)-binding positions include 397–402 and asparagine 415; that span reads GTVTRH.

The protein belongs to the isocitrate and isopropylmalate dehydrogenases family. Mg(2+) is required as a cofactor. The cofactor is Mn(2+).

The protein resides in the mitochondrion. The catalysed reaction is D-threo-isocitrate + NADP(+) = 2-oxoglutarate + CO2 + NADPH. The polypeptide is Isocitrate dehydrogenase [NADP], mitochondrial (icdA) (Aspergillus niger).